Reading from the N-terminus, the 131-residue chain is Antileukoproteinase (131 aa).

The signal sequence occupies residues 1-25 (MKSCGLLPFTVLLALGILAPWTVEG). 2 WAP domains span residues 29–77 (DAIK…VNPV) and 83–131 (VWRK…LPPM). 8 disulfides stabilise this stretch: C36–C65, C44–C69, C52–C64, C58–C73, C90–C119, C97–C123, C106–C118, and C112–C127. The interval 85 to 131 (RKPGRCVKTQARCMMLNPPNVCQRDGQCDGKYKCCEGICGKVCLPPM) is elastase inhibitory domain.

Interacts with GRN; interaction protects progranulin from proteolysis. As to expression, detected in bronchial epithelial cells. Detected in bronchoalveolar fluid after infection with M.tuberculosis (at protein level). Highest expression in lung, spleen, intestine and epididymis with lower levels in liver and seminal vesicle. No expression in brain, heart, kidney and muscle.

It localises to the secreted. Acid-stable proteinase inhibitor with strong affinities for trypsin, chymotrypsin, elastase, and cathepsin G. Modulates the innate immune response after bacterial infection. Contributes to regulate the inflammatory and immune responses to the intracellular parasite L.major. Down-regulates responses to bacterial lipopolysaccharide (LPS). Plays a role in regulating the activation of NF-kappa-B and inflammatory responses. Has antimicrobial activity against mycobacteria, but not against salmonella. Contributes to normal resistance against infection by M.tuberculosis. Required for normal resistance to L.major. Required for normal wound healing, probably by preventing tissue damage by limiting protease activity. Together with ELANE, required for normal differentiation and proliferation of bone marrow myeloid cells. The polypeptide is Antileukoproteinase (Slpi) (Mus musculus (Mouse)).